The following is a 522-amino-acid chain: Ankyrin repeat and death domain-containing protein 1A (522 aa).

ANK repeat units follow at residues 14–43 (PLERQLHEAARQNNVGRMQELIGRRVNTRA), 47–76 (VGRVALHWAAGAGHEQAVRLLLEHEAAVDE), 90–119 (FGMNALLLSAWFGHLRILQILVNSGAKIHC), 123–152 (DGLTLLHCAAQKGHVPVLAFIMEDLEDVAL), 158–187 (LGRTAFHRAAEHGQLDALDFLVGSGCDHNV), 191–220 (EGNTALHLAAGRGHMAVLQRLVDIGLDLEE), 224–253 (EGLTALHSAAGGSHPDCVQLLLRAGSTVNA), 257–286 (KNLSCLHYAALSGSEDVSRVLIHAGGCANV), 290–319 (QGASPLHLAVRHNFPALVRLLINSDSDVNA), 323–352 (RQQTPLHLAAEHAWQDIADMLLIAGVDLNL), and 356–385 (QGKTALAVAVRSNHVSLVDMIIKADRFYRW). One can recognise a Death domain in the interval 413–501 (SVLWRLASRY…DLAGWSTMAR (89 aa)).

The protein is Ankyrin repeat and death domain-containing protein 1A (ANKDD1A) of Homo sapiens (Human).